Consider the following 125-residue polypeptide: Histone H1-like protein Hc1 (125 aa).

The interval Thr-98–Lys-125 is disordered. Residues Ala-100–Lys-125 are compositionally biased toward basic residues.

The protein belongs to the histone H1/H5 family. HCT subfamily.

In terms of biological role, might have a role analogous to that of eukaryotic histone proteins. This is Histone H1-like protein Hc1 (hctA) from Chlamydia trachomatis serovar D (strain ATCC VR-885 / DSM 19411 / UW-3/Cx).